The following is a 119-amino-acid chain: Protein TusC (119 aa).

This sequence belongs to the DsrF/TusC family. In terms of assembly, heterohexamer, formed by a dimer of trimers. The hexameric TusBCD complex contains 2 copies each of TusB, TusC and TusD. The TusBCD complex interacts with TusE.

The protein resides in the cytoplasm. Part of a sulfur-relay system required for 2-thiolation of 5-methylaminomethyl-2-thiouridine (mnm(5)s(2)U) at tRNA wobble positions. The polypeptide is Protein TusC (Shigella flexneri serotype 5b (strain 8401)).